Here is a 192-residue protein sequence, read N- to C-terminus: uncharacterized protein (192 aa).

2 disordered regions span residues 1 to 37 (MASS…PAFP) and 146 to 192 (ARGP…EQNK). Composition is skewed to pro residues over residues 8–19 (TPSPAGLPPPSV) and 159–180 (APPP…PGWP).

This is an uncharacterized protein from Homo sapiens (Human).